We begin with the raw amino-acid sequence, 377 residues long: Compound eye opsin BCRH2 (377 aa).

At 1–53 the chain is on the extracellular side; that stretch reads MTNATGPQMAYYGAASMDFGYPEGVSIVDFVRPEIKPYVHQHWYNYPPVNPMW. N-linked (GlcNAc...) asparagine glycosylation is present at N3. Residues 54–78 traverse the membrane as a helical segment; that stretch reads HYLLGVIYLFLGTVSIFGNGLVIYL. At 79–90 the chain is on the cytoplasmic side; that stretch reads FNKSAALRTPAN. The chain crosses the membrane as a helical span at residues 91 to 115; that stretch reads ILVVNLALSDLIMLTTNVPFFTYNC. Residues 116–131 lie on the Extracellular side of the membrane; it reads FSGGVWMFSPQYCEIY. Cysteines 128 and 205 form a disulfide. A helical transmembrane segment spans residues 132 to 151; sequence ACLGAITGVCSIWLLCMISF. Residues 152-170 lie on the Cytoplasmic side of the membrane; that stretch reads DRYNIICNGFNGPKLTTGK. Residues 171–194 traverse the membrane as a helical segment; it reads AVVFALISWVIAIGCALPPFFGWG. Topologically, residues 195–218 are extracellular; sequence NYILEGILDSCSYDYLTQDFNTFS. Residues 219–246 form a helical membrane-spanning segment; that stretch reads YNIFIFVFDYFLPAAIIVFSYVFIVKAI. At 247–281 the chain is on the cytoplasmic side; the sequence is FAHEAAMRAQAKKMNVSTLRSNEADAQRAEIRIAK. The helical transmembrane segment at 282–305 threads the bilayer; that stretch reads TALVNVSLWFICWTPYALISLKGV. Topologically, residues 306–313 are extracellular; sequence MGDTSGIT. The helical transmembrane segment at 314-338 threads the bilayer; the sequence is PLVSTLPALLAKSCSCYNPFVYAIS. Residue K325 is modified to N6-(retinylidene)lysine. At 339-377 the chain is on the cytoplasmic side; sequence HPKYRLAITQHLPWFCVHETETKSNDDSQSNSTVAQDKA.

The protein belongs to the G-protein coupled receptor 1 family. Opsin subfamily. Phosphorylated on some or all of the serine and threonine residues present in the C-terminal region. Expressed in all of the seven retinular cells (R1-R7) forming the main rhabdom in each ommatidium.

Its subcellular location is the membrane. Functionally, visual pigments are the light-absorbing molecules that mediate vision. They consist of an apoprotein, opsin, covalently linked to cis-retinal. This opsin produces visual pigments with maximal absorption in the blue-green region of the spectrum. The polypeptide is Compound eye opsin BCRH2 (Hemigrapsus sanguineus (Asian shore crab)).